We begin with the raw amino-acid sequence, 244 residues long: MQGNEQQAYDRGITIFSPDGRLYQVEYAREAVKRGTASVGVRTEDGVVIAADRHARSPLIERDSIEKIHEIDSHVGVASAGHVADARQLIDVARRQSQVNRLRYDEPASVESLTKEITDYIQQYTQTGGARPFGVALLVAGIEDGEPRLFETDPSGTPYEWQAVAIGGSREDIQTFLEEEYAEGMDLEGGIELALRALASVNEDGLDATGVDIATIDVESEQFEKLAEDDIAERLEEFELGGEE.

The protein belongs to the peptidase T1A family. In terms of assembly, the 20S proteasome core is composed of 14 alpha and 14 beta subunits that assemble into four stacked heptameric rings, resulting in a barrel-shaped structure. The two inner rings, each composed of seven catalytic beta subunits, are sandwiched by two outer rings, each composed of seven alpha subunits. The catalytic chamber with the active sites is on the inside of the barrel. Has a gated structure, the ends of the cylinder being occluded by the N-termini of the alpha-subunits. Is capped at one or both ends by the proteasome regulatory ATPase, PAN.

It is found in the cytoplasm. The formation of the proteasomal ATPase PAN-20S proteasome complex, via the docking of the C-termini of PAN into the intersubunit pockets in the alpha-rings, triggers opening of the gate for substrate entry. Interconversion between the open-gate and close-gate conformations leads to a dynamic regulation of the 20S proteasome proteolysis activity. Component of the proteasome core, a large protease complex with broad specificity involved in protein degradation. This chain is Proteasome subunit alpha 2, found in Haloarcula marismortui (strain ATCC 43049 / DSM 3752 / JCM 8966 / VKM B-1809) (Halobacterium marismortui).